Here is a 457-residue protein sequence, read N- to C-terminus: Cysteine--tRNA ligase (457 aa).

C28 is a Zn(2+) binding site. Positions 30 to 40 (MTVYDYCHLGH) match the 'HIGH' region motif. Residues C209, H234, and E238 each contribute to the Zn(2+) site. The 'KMSKS' region signature appears at 266 to 270 (KMSKS). K269 contacts ATP.

Belongs to the class-I aminoacyl-tRNA synthetase family. In terms of assembly, monomer. Zn(2+) serves as cofactor.

It is found in the cytoplasm. It catalyses the reaction tRNA(Cys) + L-cysteine + ATP = L-cysteinyl-tRNA(Cys) + AMP + diphosphate. This chain is Cysteine--tRNA ligase, found in Laribacter hongkongensis (strain HLHK9).